The sequence spans 448 residues: N-succinylarginine dihydrolase (448 aa).

Substrate is bound by residues 19-28 (GGLSYGNVAS), N110, and 137-138 (HR). Residue E174 is part of the active site. Position 214 (R214) interacts with substrate. The active site involves H250. Substrate contacts are provided by D252 and N365. C371 functions as the Nucleophile in the catalytic mechanism.

It belongs to the succinylarginine dihydrolase family. As to quaternary structure, homodimer.

It carries out the reaction N(2)-succinyl-L-arginine + 2 H2O + 2 H(+) = N(2)-succinyl-L-ornithine + 2 NH4(+) + CO2. It participates in amino-acid degradation; L-arginine degradation via AST pathway; L-glutamate and succinate from L-arginine: step 2/5. Its function is as follows. Catalyzes the hydrolysis of N(2)-succinylarginine into N(2)-succinylornithine, ammonia and CO(2). This is N-succinylarginine dihydrolase from Pseudomonas fluorescens (strain Pf0-1).